A 450-amino-acid chain; its full sequence is Interferon regulatory factor 4 (450 aa).

Residues 21–129 (NGKLRQWLID…DPYKVYRIVP (109 aa)) constitute a DNA-binding region (IRF tryptophan pentad repeat). Ser446 and Ser447 each carry phosphoserine; by ROCK2.

Belongs to the IRF family. In terms of assembly, interacts with SPIB and DEF6. Interacts with the BATF-JUNB heterodimer. Interacts with BATF (via bZIP domain); the interaction is direct. Directly interacts with NLRP3 in the nucleus of Th2 cells; this interaction enhances IRF4 ability to bind to the IL4 promoter and is required for optimal IRF4-dependent IL4 transcription. Interacts with SPI1. Phosphorylation by ROCK2 regulates IL-17 and IL-21 production. As to expression, lymphoid cells.

The protein resides in the nucleus. It localises to the cytoplasm. Functionally, transcriptional activator. Binds to the interferon-stimulated response element (ISRE) of the MHC class I promoter. Binds the immunoglobulin lambda light chain enhancer, together with PU.1. Probably plays a role in ISRE-targeted signal transduction mechanisms specific to lymphoid cells. Involved in CD8(+) dendritic cell differentiation by forming a complex with the BATF-JUNB heterodimer in immune cells, leading to recognition of AICE sequence (5'-TGAnTCA/GAAA-3'), an immune-specific regulatory element, followed by cooperative binding of BATF and IRF4 and activation of genes. The protein is Interferon regulatory factor 4 of Mus musculus (Mouse).